A 603-amino-acid chain; its full sequence is UPF0313 protein MJ1155 (603 aa).

Residues 285 to 557 (GIVPVQFSVV…KIQKAICLYR (273 aa)) form the Radical SAM core domain. Positions 299, 303, and 306 each coordinate [4Fe-4S] cluster.

The protein belongs to the UPF0313 family. [4Fe-4S] cluster serves as cofactor.

The sequence is that of UPF0313 protein MJ1155 from Methanocaldococcus jannaschii (strain ATCC 43067 / DSM 2661 / JAL-1 / JCM 10045 / NBRC 100440) (Methanococcus jannaschii).